The chain runs to 224 residues: UPF0173 metal-dependent hydrolase TK0141 (224 aa).

The protein belongs to the UPF0173 family.

In Thermococcus kodakarensis (strain ATCC BAA-918 / JCM 12380 / KOD1) (Pyrococcus kodakaraensis (strain KOD1)), this protein is UPF0173 metal-dependent hydrolase TK0141.